A 147-amino-acid chain; its full sequence is Cytochrome c oxidase subunit 3 (147 aa).

4 consecutive transmembrane segments (helical) span residues F13–A33, G48–F68, F83–I103, and A125–W145.

This sequence belongs to the cytochrome c oxidase subunit 3 family. As to quaternary structure, component of the cytochrome c oxidase (complex IV, CIV), a multisubunit enzyme composed of a catalytic core of 3 subunits and several supernumerary subunits. The complex exists as a monomer or a dimer and forms supercomplexes (SCs) in the inner mitochondrial membrane with ubiquinol-cytochrome c oxidoreductase (cytochrome b-c1 complex, complex III, CIII).

Its subcellular location is the mitochondrion inner membrane. The catalysed reaction is 4 Fe(II)-[cytochrome c] + O2 + 8 H(+)(in) = 4 Fe(III)-[cytochrome c] + 2 H2O + 4 H(+)(out). Component of the cytochrome c oxidase, the last enzyme in the mitochondrial electron transport chain which drives oxidative phosphorylation. The respiratory chain contains 3 multisubunit complexes succinate dehydrogenase (complex II, CII), ubiquinol-cytochrome c oxidoreductase (cytochrome b-c1 complex, complex III, CIII) and cytochrome c oxidase (complex IV, CIV), that cooperate to transfer electrons derived from NADH and succinate to molecular oxygen, creating an electrochemical gradient over the inner membrane that drives transmembrane transport and the ATP synthase. Cytochrome c oxidase is the component of the respiratory chain that catalyzes the reduction of oxygen to water. Electrons originating from reduced cytochrome c in the intermembrane space (IMS) are transferred via the dinuclear copper A center (CU(A)) of subunit 2 and heme A of subunit 1 to the active site in subunit 1, a binuclear center (BNC) formed by heme A3 and copper B (CU(B)). The BNC reduces molecular oxygen to 2 water molecules using 4 electrons from cytochrome c in the IMS and 4 protons from the mitochondrial matrix. This Spodoptera frugiperda (Fall armyworm) protein is Cytochrome c oxidase subunit 3 (COIII).